A 207-amino-acid chain; its full sequence is Dephospho-CoA kinase (207 aa).

The 196-residue stretch at 12 to 207 folds into the DPCK domain; that stretch reads LIGITGMIGG…LYSTLLGKML (196 aa). ATP is bound at residue 20 to 25; sequence GGGKST.

The protein belongs to the CoaE family.

It localises to the cytoplasm. The enzyme catalyses 3'-dephospho-CoA + ATP = ADP + CoA + H(+). It participates in cofactor biosynthesis; coenzyme A biosynthesis; CoA from (R)-pantothenate: step 5/5. Catalyzes the phosphorylation of the 3'-hydroxyl group of dephosphocoenzyme A to form coenzyme A. This chain is Dephospho-CoA kinase, found in Leptospira interrogans serogroup Icterohaemorrhagiae serovar copenhageni (strain Fiocruz L1-130).